Reading from the N-terminus, the 318-residue chain is Olfactory receptor-like protein COR3 (318 aa).

Over 1 to 26 the chain is Extracellular; that stretch reads MASGNCTTPTTFILSGLTDNPGLQMP. The N-linked (GlcNAc...) asparagine glycan is linked to Asn-5. A helical transmembrane segment spans residues 27 to 49; it reads LFMVFLAIYTITLLTNLGLIRLI. Residues 50–57 lie on the Cytoplasmic side of the membrane; that stretch reads SVDLHLQT. The helical transmembrane segment at 58 to 79 threads the bilayer; sequence PMYIFLQNLSFTDAAYSTVITP. Residues 80–100 lie on the Extracellular side of the membrane; sequence KMLATFLEERKTISYVGCILQ. A disulfide bridge connects residues Cys-97 and Cys-179. Residues 101–120 form a helical membrane-spanning segment; sequence YFSFVLLTTSECLLLAVMAY. Residues 121–139 are Cytoplasmic-facing; sequence DRYVAICKPLLYPAIMTKA. The helical transmembrane segment at 140-164 threads the bilayer; the sequence is VCWRLVESLYFLAFLNSLVHTCGLL. Over 165–205 the chain is Extracellular; it reads KLSFCYSNVVNHFFCDISPLFQISSSSIAISELLVIISGSL. A helical transmembrane segment spans residues 206 to 226; that stretch reads FVMSSIIIILISYVFIILTVV. At 227-239 the chain is on the cytoplasmic side; it reads MIRSKDGKYKAFS. Residues 240–260 traverse the membrane as a helical segment; it reads TCTSHLMAVSLFHGTVIFMYL. Residues 261–271 lie on the Extracellular side of the membrane; that stretch reads RPVKLFSLDTD. A helical membrane pass occupies residues 272 to 292; it reads KIASLFYTVVIPMLNPLIYSW. Residues 293–318 are Cytoplasmic-facing; the sequence is RNKEVKDALRRLTATTFGFIDSKAVQ.

This sequence belongs to the G-protein coupled receptor 1 family.

Its subcellular location is the cell membrane. Functionally, odorant receptor. The protein is Olfactory receptor-like protein COR3 (COR3) of Gallus gallus (Chicken).